A 600-amino-acid chain; its full sequence is Monooxygenase ptmN (600 aa).

It belongs to the FMO family. Requires FAD as cofactor.

The protein operates within secondary metabolite biosynthesis. Its function is as follows. Monooxygenase; part of the gene cluster that mediates the biosynthesis of the indole diterpenes penitrems. The geranylgeranyl diphosphate (GGPP) synthase ptmG catalyzes the first step in penitrem biosynthesis via conversion of farnesyl pyrophosphate and isopentyl pyrophosphate into geranylgeranyl pyrophosphate (GGPP). Condensation of indole-3-glycerol phosphate with GGPP by the prenyl transferase ptmC then forms 3-geranylgeranylindole (3-GGI). Epoxidation by the FAD-dependent monooxygenase ptmM leads to a epoxidized-GGI that is substrate of the terpene cyclase ptmB for cyclization to yield paspaline. Paspaline is subsequently converted to 13-desoxypaxilline by the cytochrome P450 monooxygenase ptmP, the latter being then converted to paxilline by the cytochrome P450 monooxygenase ptmQ. Paxilline is converted to beta-paxitriol via C-10 ketoreduction by the short-chain dehydrogenase ptmH which can be monoprenylated at the C-20 by the indole diterpene prenyltransferase ptmD. A two-step elimination (acetylation and elimination) process performed by the O-acetyltransferase ptmV and ptmI leads to the production of the prenylated form of penijanthine. The FAD-linked oxidoreductase ptmO then converts the prenylated form of penijanthine into PC-M5 which is in turn transformed into PC-M4 by the aromatic dimethylallyltransferase ptmE. Five sequential oxidative transformations performed by the cytochrome P450 monooxygenases ptmK, ptmU, ptmL, ptmN and ptmJ yield the various penitrem compounds. PtmK, ptmU and ptmM are involved in the formation of the key bicyclic ring of penitrem C via the formation of the intermediates secopenitrem D and penitrem D. PtmL catalyzes the epoxidation of penitrem D and C to yield penitrem B and F, respectively. PtmJ catalyzes the last benzylic hydroxylation to convert penitrem B to prenitrem E and penitrem F to penitrem A. The chain is Monooxygenase ptmN from Penicillium ochrochloron.